Consider the following 121-residue polypeptide: MPRVKRGVTARARHKKITDAATGYRGRRKNVFRIAKQAVMRAGQYAYRDRRNKKRVFRALWIARINAAVRQHDMTYSVFMNGMKKAAIELDRKVLSDMAIADKAAFAALVTRIKSVVNAAA.

It belongs to the bacterial ribosomal protein bL20 family.

In terms of biological role, binds directly to 23S ribosomal RNA and is necessary for the in vitro assembly process of the 50S ribosomal subunit. It is not involved in the protein synthesizing functions of that subunit. The chain is Large ribosomal subunit protein bL20 from Polynucleobacter asymbioticus (strain DSM 18221 / CIP 109841 / QLW-P1DMWA-1) (Polynucleobacter necessarius subsp. asymbioticus).